The following is a 121-amino-acid chain: Fluoride-specific ion channel FluC 1 (121 aa).

Helical transmembrane passes span Tyr-3–Leu-23, Val-35–Phe-55, Ala-64–Ile-84, and Phe-92–Val-112. Na(+) is bound by residues Gly-71 and Thr-74.

It belongs to the fluoride channel Fluc/FEX (TC 1.A.43) family.

It is found in the cell membrane. The catalysed reaction is fluoride(in) = fluoride(out). Its activity is regulated as follows. Na(+) is not transported, but it plays an essential structural role and its presence is essential for fluoride channel function. In terms of biological role, fluoride-specific ion channel. Important for reducing fluoride concentration in the cell, thus reducing its toxicity. The sequence is that of Fluoride-specific ion channel FluC 1 from Staphylococcus aureus (strain bovine RF122 / ET3-1).